Consider the following 475-residue polypeptide: Vasculin-like protein 1 (475 aa).

Residues S49 and S76 each carry the phosphoserine modification. Disordered stretches follow at residues N92–G115 and P160–Q191. S202 carries the phosphoserine modification. Disordered stretches follow at residues L237–L271 and P292–T318. A compositionally biased stretch (low complexity) spans E294–T311. Phosphothreonine is present on T300. S383 is subject to Phosphoserine. Residues C456–K475 are disordered.

This sequence belongs to the vasculin family.

The protein localises to the nucleus. In terms of biological role, possible transcription factor. The sequence is that of Vasculin-like protein 1 (Gpbp1l1) from Rattus norvegicus (Rat).